The chain runs to 887 residues: Kinesin-like protein KIF20A (887 aa).

At S2 the chain carries N-acetylserine. Residues S7, S14, and S21 each carry the phosphoserine modification. Residues 63–506 enclose the Kinesin motor domain; sequence KVKVYLRIRP…AKFSALASQL (444 aa). 159–166 contacts ATP; it reads GVTNSGKT. The residue at position 527 (S527) is a Phosphoserine; by PLK1. Positions 527 to 553 are disordered; sequence SPQVGPGLEKEDKADSDLEDSPEDEAD. Residues 543-553 show a composition bias toward acidic residues; that stretch reads DLEDSPEDEAD. Residues 559-804 adopt a coiled-coil conformation; that stretch reads KEELLQVVEA…VLVKLDLQKK (246 aa). A phosphoserine mark is found at S683 and S823. The segment at 805–887 is globular; the sequence is AACIAEQYHT…LLKSPFGKKY (83 aa). Positions 826 to 875 are disordered; that stretch reads KRLGANQENQQPNHQPPGKKPFLRNLLPRTPTCQSSTDSSPYARILRSRH. At T855 the chain carries Phosphothreonine. The segment covering 856–865 has biased composition (polar residues); sequence PTCQSSTDSS. Residues S865, S876, and S881 each carry the phosphoserine modification.

This sequence belongs to the TRAFAC class myosin-kinesin ATPase superfamily. Kinesin family. Post-translationally, phosphorylated by PLK1 at Ser-527 during mitosis, creating a docking site for PLK1 and recruiting PLK1 at central spindle. As to expression, ubiquitously expressed, with highest levels in spleen and testis.

It localises to the golgi apparatus. The protein resides in the cytoplasm. Its subcellular location is the cytoskeleton. The protein localises to the spindle. In terms of biological role, mitotic kinesin required for chromosome passenger complex (CPC)-mediated cytokinesis. Following phosphorylation by PLK1, involved in recruitment of PLK1 to the central spindle. Interacts with guanosine triphosphate (GTP)-bound forms of RAB6A and RAB6B. May act as a motor required for the retrograde RAB6 regulated transport of Golgi membranes and associated vesicles along microtubules. Has a microtubule plus end-directed motility. The sequence is that of Kinesin-like protein KIF20A (Kif20a) from Mus musculus (Mouse).